The chain runs to 199 residues: NAD(P)H-quinone oxidoreductase subunit 6, chloroplastic (199 aa).

Transmembrane regions (helical) follow at residues Ala-13 to Thr-33, Ile-35 to Leu-55, Val-64 to Ile-84, Trp-96 to Ile-118, and Leu-157 to Ala-177.

Belongs to the complex I subunit 6 family. NDH is composed of at least 16 different subunits, 5 of which are encoded in the nucleus.

It localises to the plastid. Its subcellular location is the chloroplast thylakoid membrane. It carries out the reaction a plastoquinone + NADH + (n+1) H(+)(in) = a plastoquinol + NAD(+) + n H(+)(out). The enzyme catalyses a plastoquinone + NADPH + (n+1) H(+)(in) = a plastoquinol + NADP(+) + n H(+)(out). In terms of biological role, NDH shuttles electrons from NAD(P)H:plastoquinone, via FMN and iron-sulfur (Fe-S) centers, to quinones in the photosynthetic chain and possibly in a chloroplast respiratory chain. The immediate electron acceptor for the enzyme in this species is believed to be plastoquinone. Couples the redox reaction to proton translocation, and thus conserves the redox energy in a proton gradient. The protein is NAD(P)H-quinone oxidoreductase subunit 6, chloroplastic (ndhG) of Huperzia lucidula (Shining clubmoss).